Consider the following 184-residue polypeptide: Transmembrane protein 140 (184 aa).

Topologically, residues 1–12 are cytoplasmic; that stretch reads MAISRVWRNRLS. The chain crosses the membrane as a helical span at residues 13-33; sequence FMAIMILVAMVLSLMSYALLW. The Extracellular segment spans residues 34-83; the sequence is KAGNLTDVPNLRIGFYNFCLWKEDIGSLECYNFPELGVLGIPQVGLALAR. Asn-37 is a glycosylation site (N-linked (GlcNAc...) asparagine). The helical transmembrane segment at 84–104 threads the bilayer; the sequence is LGVYGALVLAVFVPLPLLLAQ. The Cytoplasmic portion of the chain corresponds to 105–117; that stretch reads CNSDEGEWRLAVG. The helical transmembrane segment at 118–138 threads the bilayer; the sequence is FLGASSVLLAGGLSLFLFLVW. The Extracellular segment spans residues 139 to 149; that stretch reads KWLRLSFLGPG. A helical membrane pass occupies residues 150–170; it reads FLSLCLAQALLIILLMAMVMF. At 171-184 the chain is on the cytoplasmic side; that stretch reads PPRDKKDKNHWENC.

The protein localises to the membrane. This chain is Transmembrane protein 140 (Tmem140), found in Rattus norvegicus (Rat).